Here is a 427-residue protein sequence, read N- to C-terminus: Serine--tRNA ligase 2 (427 aa).

A compositionally biased stretch (basic and acidic residues) spans 35 to 53; it reads RRRSEAQAEVTRLRTELNR. Residues 35–72 are disordered; it reads RRRSEAQAEVTRLRTELNRTSRARGRSGPPSEEEKEAA. 230–232 provides a ligand contact to L-serine; it reads TAE. An ATP-binding site is contributed by 261–263; it reads RAE. Position 284 (Glu284) interacts with L-serine. Residue 348 to 351 participates in ATP binding; it reads EISS. Ser383 lines the L-serine pocket.

The protein belongs to the class-II aminoacyl-tRNA synthetase family. Type-1 seryl-tRNA synthetase subfamily. As to quaternary structure, homodimer. The tRNA molecule binds across the dimer.

The protein resides in the cytoplasm. The catalysed reaction is tRNA(Ser) + L-serine + ATP = L-seryl-tRNA(Ser) + AMP + diphosphate + H(+). The enzyme catalyses tRNA(Sec) + L-serine + ATP = L-seryl-tRNA(Sec) + AMP + diphosphate + H(+). Its pathway is aminoacyl-tRNA biosynthesis; selenocysteinyl-tRNA(Sec) biosynthesis; L-seryl-tRNA(Sec) from L-serine and tRNA(Sec): step 1/1. Functionally, catalyzes the attachment of serine to tRNA(Ser). Is also able to aminoacylate tRNA(Sec) with serine, to form the misacylated tRNA L-seryl-tRNA(Sec), which will be further converted into selenocysteinyl-tRNA(Sec). This Streptomyces avermitilis (strain ATCC 31267 / DSM 46492 / JCM 5070 / NBRC 14893 / NCIMB 12804 / NRRL 8165 / MA-4680) protein is Serine--tRNA ligase 2.